The chain runs to 380 residues: Forkhead box protein F1 (380 aa).

The span at 1 to 19 (MTAEVQQPSVQTPAHSSPM) shows a compositional bias: polar residues. A disordered region spans residues 1–49 (MTAEVQQPSVQTPAHSSPMTEKPVQTPVMETSSSSSSTKAKKTNAGIRR). Positions 52–146 (KPPYSYIALI…EEGSFRRRPR (95 aa)) form a DNA-binding region, fork-head.

The protein resides in the nucleus. The chain is Forkhead box protein F1 (foxf1) from Danio rerio (Zebrafish).